A 64-amino-acid polypeptide reads, in one-letter code: Large ribosomal subunit protein bL33 (64 aa).

It belongs to the bacterial ribosomal protein bL33 family.

This chain is Large ribosomal subunit protein bL33, found in Crocosphaera subtropica (strain ATCC 51142 / BH68) (Cyanothece sp. (strain ATCC 51142)).